The primary structure comprises 240 residues: Protein GrpE (240 aa).

Disordered regions lie at residues 1-54 (MSGD…NEAR) and 206-240 (VSMG…DGNG). Over residues 215–233 (GASSQPAEAPAADAPAEDS) the composition is skewed to low complexity.

The protein belongs to the GrpE family. As to quaternary structure, homodimer.

The protein localises to the cytoplasm. Participates actively in the response to hyperosmotic and heat shock by preventing the aggregation of stress-denatured proteins, in association with DnaK and GrpE. It is the nucleotide exchange factor for DnaK and may function as a thermosensor. Unfolded proteins bind initially to DnaJ; upon interaction with the DnaJ-bound protein, DnaK hydrolyzes its bound ATP, resulting in the formation of a stable complex. GrpE releases ADP from DnaK; ATP binding to DnaK triggers the release of the substrate protein, thus completing the reaction cycle. Several rounds of ATP-dependent interactions between DnaJ, DnaK and GrpE are required for fully efficient folding. The sequence is that of Protein GrpE from Synechococcus sp. (strain WH7803).